Consider the following 298-residue polypeptide: Tyrosine recombinase XerC (298 aa).

One can recognise a Core-binding (CB) domain in the interval 1–84 (MNHIQDAFLN…TLRTFYEYWM (84 aa)). A Tyr recombinase domain is found at 105–286 (YLPQFFYEEE…SNQQLRKVYL (182 aa)). Residues arginine 145, lysine 169, histidine 238, arginine 241, and histidine 264 contribute to the active site. The active-site O-(3'-phospho-DNA)-tyrosine intermediate is the tyrosine 273.

The protein belongs to the 'phage' integrase family. XerC subfamily. As to quaternary structure, forms a cyclic heterotetrameric complex composed of two molecules of XerC and two molecules of XerD.

Its subcellular location is the cytoplasm. Site-specific tyrosine recombinase, which acts by catalyzing the cutting and rejoining of the recombining DNA molecules. The XerC-XerD complex is essential to convert dimers of the bacterial chromosome into monomers to permit their segregation at cell division. It also contributes to the segregational stability of plasmids. The chain is Tyrosine recombinase XerC from Staphylococcus aureus (strain USA300).